The following is a 348-amino-acid chain: Anthranilate phosphoribosyltransferase (348 aa).

Residues Gly-81, 84–85 (GD), 91–94 (NVST), 109–117 (KHGNRAVSG), and Ser-121 each bind 5-phospho-alpha-D-ribose 1-diphosphate. Gly-81 contributes to the anthranilate binding site. A Mg(2+)-binding site is contributed by Ser-93. Asn-112 is a binding site for anthranilate. Arg-167 is an anthranilate binding site. Asp-226 and Glu-227 together coordinate Mg(2+).

It belongs to the anthranilate phosphoribosyltransferase family. Homodimer. Mg(2+) is required as a cofactor.

It carries out the reaction N-(5-phospho-beta-D-ribosyl)anthranilate + diphosphate = 5-phospho-alpha-D-ribose 1-diphosphate + anthranilate. The protein operates within amino-acid biosynthesis; L-tryptophan biosynthesis; L-tryptophan from chorismate: step 2/5. Functionally, catalyzes the transfer of the phosphoribosyl group of 5-phosphorylribose-1-pyrophosphate (PRPP) to anthranilate to yield N-(5'-phosphoribosyl)-anthranilate (PRA). The chain is Anthranilate phosphoribosyltransferase from Ectopseudomonas mendocina (strain ymp) (Pseudomonas mendocina).